The primary structure comprises 315 residues: LCDKKIQLGINLTKGLGAGALPDVGKGAAEESIDEIMEHIKDSHMLFITAGMGGGTGTGAAPVIAKAAREARAVVKDKGAKEKKILTVGVVTKPFGFEGVRRMRIAELGLEELQKYVDTLIVIPNQNLFRIANEKTTFADAFQLADNVLHIGIRGVTDLMIMPGLINLDFADIETVMSEMGKAMIGTGEAEGEDRAISAAEAAISNPLLDNVSMKGAQGILINITGGGDMTLFEVDSAANRVREEVDENANIIFGATFDQAMEGRVRVSVLATGIDSCNDNSSVNQNKIPAEEKNFKWPYNQIPILETKEYASTE.

GTP-binding positions include 55-57, Glu98, Arg102, and Asp146; that span reads GTG.

It belongs to the FtsZ family. As to quaternary structure, homodimer. Polymerizes to form a dynamic ring structure in a strictly GTP-dependent manner. Interacts directly with several other division proteins.

It is found in the cytoplasm. Its function is as follows. Essential cell division protein that forms a contractile ring structure (Z ring) at the future cell division site. The regulation of the ring assembly controls the timing and the location of cell division. One of the functions of the FtsZ ring is to recruit other cell division proteins to the septum to produce a new cell wall between the dividing cells. Binds GTP and shows GTPase activity. The polypeptide is Cell division protein FtsZ (Wolbachia pipientis).